The primary structure comprises 455 residues: Beta-cyclopiazonate dehydrogenase (455 aa).

A signal peptide spans 1 to 20; the sequence is MATRIASFIGISTVASLALA.

It belongs to the beta-cyclopiazonate dehydrogenase family. It depends on FAD as a cofactor.

The catalysed reaction is beta-cyclopiazonate + A = alpha-cyclopiazonate + AH2. In terms of biological role, beta-cyclopiazonate dehydrogenase involved in the synthesis of the fungal neurotoxin alpha-cyclopiazonic acid (CPA). CpaO carries out the dehydrogenation of beta-CPA to yield an unstable enimine product, which is captured by intramolecular cyclization to create the pentacyclic fused scaffold of alpha-cyclopiazonate. The polypeptide is Beta-cyclopiazonate dehydrogenase (Aspergillus flavus (strain ATCC 200026 / FGSC A1120 / IAM 13836 / NRRL 3357 / JCM 12722 / SRRC 167)).